The primary structure comprises 189 residues: Cell division protein SepF (189 aa).

The segment at 25–70 (ESRVQQQAVKPSNSRPAQQEPVRDIKQPRLVSSSSQHVTNTPSSNE) is disordered. 2 stretches are compositionally biased toward polar residues: residues 27 to 41 (RVQQ…SRPA) and 54 to 70 (LVSS…SSNE).

The protein belongs to the SepF family. In terms of assembly, homodimer. Interacts with FtsZ.

The protein resides in the cytoplasm. In terms of biological role, cell division protein that is part of the divisome complex and is recruited early to the Z-ring. Probably stimulates Z-ring formation, perhaps through the cross-linking of FtsZ protofilaments. Its function overlaps with FtsA. The chain is Cell division protein SepF from Streptococcus gordonii (strain Challis / ATCC 35105 / BCRC 15272 / CH1 / DL1 / V288).